A 214-amino-acid polypeptide reads, in one-letter code: Ribonuclease HII (214 aa).

One can recognise an RNase H type-2 domain in the interval 26 to 214 (EIVCGVDEAG…PVREAFDLIR (189 aa)). Residues Asp-32, Glu-33, and Asp-124 each contribute to the a divalent metal cation site.

This sequence belongs to the RNase HII family. The cofactor is Mn(2+). Mg(2+) serves as cofactor.

It localises to the cytoplasm. It catalyses the reaction Endonucleolytic cleavage to 5'-phosphomonoester.. In terms of biological role, endonuclease that specifically degrades the RNA of RNA-DNA hybrids. The sequence is that of Ribonuclease HII from Burkholderia pseudomallei (strain 668).